The chain runs to 483 residues: Altronate oxidoreductase (483 aa).

18–29 is an NAD(+) binding site; it reads IIQFGEGNFLRA.

This sequence belongs to the mannitol dehydrogenase family. UxaB subfamily.

The catalysed reaction is D-altronate + NAD(+) = keto-D-tagaturonate + NADH + H(+). It participates in carbohydrate metabolism; pentose and glucuronate interconversion. This Escherichia coli O17:K52:H18 (strain UMN026 / ExPEC) protein is Altronate oxidoreductase.